We begin with the raw amino-acid sequence, 725 residues long: Exocyst complex component 8 (725 aa).

At S19 the chain carries Phosphoserine. The segment at 116 to 159 is disordered; the sequence is AASGGEEGGGGAGGRDQLRGQTGFFPSPGGASRDGSGPGEEGKQ. Over residues 120 to 129 the composition is skewed to gly residues; sequence GEEGGGGAGG. Residues 182–282 form the PH domain; sequence YLVYNGDLVE…WLEVLEETKR (101 aa). The disordered stretch occupies residues 285 to 322; the sequence is SEKRRREQEEAAAPRGPPQVTPKASNPFEDEDDDEPTV. Positions 312-322 are enriched in acidic residues; that stretch reads FEDEDDDEPTV.

This sequence belongs to the EXO84 family. As to quaternary structure, the exocyst complex is composed of EXOC1, EXOC2, EXOC3, EXOC4, EXOC5, EXOC6, EXOC7 and EXOC8. Interacts (via PH domain) with GTP-bound RALA and RALB. Interacts with SH3BP1; required for the localization of both SH3BP1 and the exocyst to the leading edge of migrating cells.

The protein localises to the cytoplasm. The protein resides in the perinuclear region. It is found in the cell projection. Its subcellular location is the growth cone. Its function is as follows. Component of the exocyst complex involved in the docking of exocytic vesicles with fusion sites on the plasma membrane. This chain is Exocyst complex component 8 (EXOC8), found in Bos taurus (Bovine).